The primary structure comprises 475 residues: ATP synthase subunit beta, chloroplastic (475 aa).

Residue 155-162 (GGAGVGKT) participates in ATP binding.

The protein belongs to the ATPase alpha/beta chains family. As to quaternary structure, F-type ATPases have 2 components, CF(1) - the catalytic core - and CF(0) - the membrane proton channel. CF(1) has five subunits: alpha(3), beta(3), gamma(1), delta(1), epsilon(1). CF(0) has four main subunits: a(1), b(1), b'(1) and c(9-12).

It localises to the plastid. The protein localises to the chloroplast thylakoid membrane. It catalyses the reaction ATP + H2O + 4 H(+)(in) = ADP + phosphate + 5 H(+)(out). Produces ATP from ADP in the presence of a proton gradient across the membrane. The catalytic sites are hosted primarily by the beta subunits. This chain is ATP synthase subunit beta, chloroplastic, found in Guillardia theta (Cryptophyte).